Reading from the N-terminus, the 296-residue chain is Fructose-bisphosphate aldolase class 1 (296 aa).

The active-site Proton acceptor is E175. K212 serves as the catalytic Schiff-base intermediate with dihydroxyacetone-P.

This sequence belongs to the class I fructose-bisphosphate aldolase family.

The catalysed reaction is beta-D-fructose 1,6-bisphosphate = D-glyceraldehyde 3-phosphate + dihydroxyacetone phosphate. It functions in the pathway carbohydrate degradation; glycolysis; D-glyceraldehyde 3-phosphate and glycerone phosphate from D-glucose: step 4/4. The protein is Fructose-bisphosphate aldolase class 1 of Staphylococcus aureus (strain bovine RF122 / ET3-1).